Here is a 551-residue protein sequence, read N- to C-terminus: Lysine--tRNA ligase (551 aa).

The 'HIGH' region signature appears at 54–62; it reads PSGLPHIGT. Positions 303 to 307 match the 'KMSKS' region motif; sequence KISKS. Lys-306 lines the ATP pocket.

The protein belongs to the class-I aminoacyl-tRNA synthetase family.

The protein localises to the cytoplasm. The enzyme catalyses tRNA(Lys) + L-lysine + ATP = L-lysyl-tRNA(Lys) + AMP + diphosphate. This is Lysine--tRNA ligase from Brucella melitensis biotype 1 (strain ATCC 23456 / CCUG 17765 / NCTC 10094 / 16M).